The chain runs to 71 residues: Non-disulfide-bridged peptide 5.5 (71 aa).

Positions 1–23 are cleaved as a signal peptide; it reads MKTQFIVLIVAIVFLQLLSQSEA. Leu36 is modified (leucine amide). Positions 40–71 are excised as a propeptide; the sequence is DLRHLDLDQFDDMFDQPEISAADMKFLQDLLR.

This sequence belongs to the non-disulfide-bridged peptide (NDBP) superfamily. Short antimicrobial peptide (group 4) family. As to expression, expressed by the venom gland.

The protein localises to the secreted. The protein resides in the target cell membrane. Antimicrobial peptide. Is active on Mycobacterium abscessus subsp. massiliense (MBC=200 uM), a rapidly growing and emerging pathogen associated with healthcare infections. Also shows antifungal activities. Has a weak hemolytic activity on human erythrocytes (10% at 610 uM), indicating a low toxicity (therapeutic index (TI)=3.05). In addition, treatment of infected macrophages reduces the bacterial load. In vivo, treatment of M.abscessus-infected mice causes a decrease in the bacterial load in the lungs and liver. This chain is Non-disulfide-bridged peptide 5.5, found in Hoffmannihadrurus gertschi (Scorpion).